The sequence spans 444 residues: Protein phosphatase 2C homolog C10F6.17c (444 aa).

One can recognise a PPM-type phosphatase domain in the interval 85–439 (RYDFNQVASN…DDITVTVIFF (355 aa)). Mn(2+)-binding residues include aspartate 121, glycine 122, and aspartate 344.

The protein belongs to the PP2C family. Mg(2+) is required as a cofactor. It depends on Mn(2+) as a cofactor.

It is found in the mitochondrion. It carries out the reaction O-phospho-L-seryl-[protein] + H2O = L-seryl-[protein] + phosphate. It catalyses the reaction O-phospho-L-threonyl-[protein] + H2O = L-threonyl-[protein] + phosphate. In terms of biological role, involved in regulation of pyruvate dehydrogenase activity. This is Protein phosphatase 2C homolog C10F6.17c from Schizosaccharomyces pombe (strain 972 / ATCC 24843) (Fission yeast).